Here is a 421-residue protein sequence, read N- to C-terminus: Testin (421 aa).

The PET domain occupies M92–D199. Positions K134–C164 are disordered. Residues P155–C164 are compositionally biased toward basic and acidic residues. LIM zinc-binding domains lie at Y234–E297, P299–V359, and Q362–S421.

This sequence belongs to the prickle / espinas / testin family. In terms of assembly, interacts via LIM domain 1 with ZYX. Interacts (via LIM domain 3) with ENAH and VASP. Interacts with ALKBH4, talin, actin, alpha-actinin, GRIP1 and PXN. Interacts (via LIM domain 2) with ACTL7A (via N-terminus). Heterodimer with ACTL7A; the heterodimer interacts with ENAH to form a heterotrimer.

It localises to the cytoplasm. The protein localises to the cell junction. Its subcellular location is the focal adhesion. Its function is as follows. Scaffold protein that may play a role in cell adhesion, cell spreading and in the reorganization of the actin cytoskeleton. Plays a role in the regulation of cell proliferation. May act as a tumor suppressor. In Eulemur macaco macaco (Black lemur), this protein is Testin (TES).